The following is a 337-amino-acid chain: MQTLVNKIWYQGHPLQWLLLPLSFVFGFITFVRRGLFQLGLKAQTILPVPVIVVGNITVGGSGKTPMVIYLIELLRAHGFNPGVISRGYGANIDGVKQVAYNASATDVGDEPAMIVARSGVPMVVGSKRVEAANVLIAEHGVDVIICDDGLQHYALGRDIELVVIDGQRRLGNEYLLPAGPLREGPWRLKDVDFVVINGGNADVGQFEMQLAPTQVKAVDGNIITTDFDKSQPLVAMAGIGNPTRFFDSLQAQGYQVVLSHGFDDHQAYDKKQLCDLAKDLPLMMTEKDAVKCRDFAQENWWYLAVNAKLSPQFDEQLLSRLHEVVAAKQGNSHGIR.

Residue threonine 58–threonine 65 participates in ATP binding.

Belongs to the LpxK family.

It carries out the reaction a lipid A disaccharide + ATP = a lipid IVA + ADP + H(+). The protein operates within glycolipid biosynthesis; lipid IV(A) biosynthesis; lipid IV(A) from (3R)-3-hydroxytetradecanoyl-[acyl-carrier-protein] and UDP-N-acetyl-alpha-D-glucosamine: step 6/6. Transfers the gamma-phosphate of ATP to the 4'-position of a tetraacyldisaccharide 1-phosphate intermediate (termed DS-1-P) to form tetraacyldisaccharide 1,4'-bis-phosphate (lipid IVA). The sequence is that of Tetraacyldisaccharide 4'-kinase from Shewanella putrefaciens (strain CN-32 / ATCC BAA-453).